Consider the following 145-residue polypeptide: Cell division protein SepF (145 aa).

The protein belongs to the SepF family. As to quaternary structure, homodimer. Interacts with FtsZ.

The protein resides in the cytoplasm. Its function is as follows. Cell division protein that is part of the divisome complex and is recruited early to the Z-ring. Probably stimulates Z-ring formation, perhaps through the cross-linking of FtsZ protofilaments. Its function overlaps with FtsA. The chain is Cell division protein SepF from Lactobacillus acidophilus (strain ATCC 700396 / NCK56 / N2 / NCFM).